Here is a 311-residue protein sequence, read N- to C-terminus: CID domain-containing protein 1 (311 aa).

The 134-residue stretch at 1 to 134 (MSDFTEQTLR…RLQEAHQQMK (134 aa)) folds into the CID domain. Residues 224–256 (MLEDYVKRLKEETKERESLETNLNMLIQNVRMS) are a coiled coil.

This Caenorhabditis briggsae protein is CID domain-containing protein 1 (cids-1).